The sequence spans 338 residues: Glyceraldehyde-3-phosphate dehydrogenase 2 (338 aa).

NAD(+) is bound by residues 12–13 (RI), D34, and R79. Residues 150-152 (SCT), T181, 210-211 (TG), and R233 each bind D-glyceraldehyde 3-phosphate. Catalysis depends on C151, which acts as the Nucleophile. N315 contacts NAD(+).

Belongs to the glyceraldehyde-3-phosphate dehydrogenase family. Homotetramer.

It is found in the cytoplasm. It carries out the reaction D-glyceraldehyde 3-phosphate + phosphate + NAD(+) = (2R)-3-phospho-glyceroyl phosphate + NADH + H(+). Its pathway is carbohydrate degradation; glycolysis; pyruvate from D-glyceraldehyde 3-phosphate: step 1/5. This is Glyceraldehyde-3-phosphate dehydrogenase 2 (GPD2) from Mucor circinelloides f. lusitanicus (Mucor racemosus var. lusitanicus).